A 155-amino-acid chain; its full sequence is Large ribosomal subunit protein uL15 (155 aa).

A compositionally biased stretch (basic and acidic residues) spans 1–13 (MKLNELRDAEGAT). The segment at 1–41 (MKLNELRDAEGATKARKRVGRGIGSGSGKTGGRGVKGQKSR) is disordered. Over residues 21-35 (RGIGSGSGKTGGRGV) the composition is skewed to gly residues.

This sequence belongs to the universal ribosomal protein uL15 family. In terms of assembly, part of the 50S ribosomal subunit.

In terms of biological role, binds to the 23S rRNA. The polypeptide is Large ribosomal subunit protein uL15 (Chelativorans sp. (strain BNC1)).